The sequence spans 202 residues: Glycerol-3-phosphate acyltransferase (202 aa).

The next 6 helical transmembrane spans lie at 2 to 22, 54 to 74, 85 to 105, 120 to 140, 141 to 161, and 162 to 182; these read MIVV…GYVI, FIVT…PIWF, FFTH…YPIY, VVLG…FGVL, YIFK…VIGS, and LIIQ…ILIV.

It belongs to the PlsY family. As to quaternary structure, probably interacts with PlsX.

Its subcellular location is the cell membrane. It carries out the reaction an acyl phosphate + sn-glycerol 3-phosphate = a 1-acyl-sn-glycero-3-phosphate + phosphate. The protein operates within lipid metabolism; phospholipid metabolism. Catalyzes the transfer of an acyl group from acyl-phosphate (acyl-PO(4)) to glycerol-3-phosphate (G3P) to form lysophosphatidic acid (LPA). This enzyme utilizes acyl-phosphate as fatty acyl donor, but not acyl-CoA or acyl-ACP. This chain is Glycerol-3-phosphate acyltransferase, found in Staphylococcus haemolyticus (strain JCSC1435).